The sequence spans 355 residues: NAD-dependent protein deacylase sirtuin-6 (355 aa).

Position 2 is an N-acetylserine (Ser2). Ser10 bears the Phosphoserine mark. The 246-residue stretch at 27–272 (PEELERKVWE…TRLMKHLGLE (246 aa)) folds into the Deacetylase sirtuin-type domain. At Lys33 the chain carries N6-acetyllysine. Residues Ala53, Thr57, Phe64, Arg65, Trp71, Gln113, and His133 each contribute to the NAD(+) site. Catalysis depends on His133, which acts as the Proton acceptor. Cys141, Cys144, and Cys166 together coordinate Zn(2+). A Glycyl lysine isopeptide (Lys-Gly) (interchain with G-Cter in ubiquitin) cross-link involves residue Lys170. Residue Cys177 participates in Zn(2+) binding. The NAD(+) site is built by Gly214, Ser216, Asn240, Gln242, and Val258. Positions 284–355 (RALPPLPRPP…KRVKAEAVPS (72 aa)) are disordered. A compositionally biased stretch (pro residues) spans 287–296 (PPLPRPPTPK). Thr294 bears the Phosphothreonine mark. 2 positions are modified to phosphoserine: Ser303 and Ser330.

The protein belongs to the sirtuin family. Class IV subfamily. Homodimer; binds to nucleosomes and DNA ends as a homodimer. Interacts with RELA; interferes with RELA binding to target DNA. Interacts with SMARCA5; promoting recruitment of SMARCA5/SNF2H to double-strand breaks (DSBs) sites. Interacts with the mTORC2 complex; preventing the ability of SIRT6 to deacetylate FOXO1. Interacts with the CLOCK-BMAL1 complex; recruited by the CLOCK-BMAL1 complex to regulate expression of clock-controlled genes. Interacts with CSNK2A2; preventing CSNK2A2 localization to the nucleus. In terms of processing, acetylated at Lys-33. Deacetylation at Lys-33 by SIRT1 promotes homomultimerization and binding to double-strand breaks (DSBs) sites. Post-translationally, phosphorylation at Ser-10 by MAPK8/JNK1 in response to oxidative stress stimulates the mono-ADP-ribosyltransferase activity on PARP1, leading to PARP1 recruitment to double-strand breaks (DSBs). Monoubiquitinated at Lys-170 by STUB1/CHIP, preventing its degradation by the proteasome. In terms of processing, sumoylated, leading to specifically decrease ability to deacetylate histone H3 at 'Lys-56' (H3K56ac).

It is found in the nucleus. It localises to the chromosome. Its subcellular location is the telomere. The protein resides in the endoplasmic reticulum. It carries out the reaction N(6)-acetyl-L-lysyl-[protein] + NAD(+) + H2O = 2''-O-acetyl-ADP-D-ribose + nicotinamide + L-lysyl-[protein]. It catalyses the reaction N(6)-tetradecanoyl-L-lysyl-[protein] + NAD(+) + H2O = 2''-O-tetradecanoyl-ADP-D-ribose + nicotinamide + L-lysyl-[protein]. The catalysed reaction is N(6)-hexadecanoyl-L-lysyl-[protein] + NAD(+) + H2O = 2''-O-hexadecanoyl-ADP-D-ribose + nicotinamide + L-lysyl-[protein]. The enzyme catalyses L-lysyl-[protein] + NAD(+) = N(6)-(ADP-D-ribosyl)-L-lysyl-[protein] + nicotinamide + H(+). It carries out the reaction L-arginyl-[protein] + NAD(+) = N(omega)-(ADP-D-ribosyl)-L-arginyl-[protein] + nicotinamide + H(+). Compared to the defatty-acylase activity, the protein deacetylase activity is weak in vitro, and requires activation. The histone deacetylase activity is strongly activated upon binding to nucleosomes and chromatin in vivo. Two molecules of SIRT6 associate with the acidic patch of one nucleosome, while the C-terminal disordered region of SIRT6 associates with nucleosomal DNA, leading to efficient histone deacetylation. The protein-lysine deacetylase activity is also activated by long-chain free fatty-acids. NAD-dependent protein deacetylase, deacylase and mono-ADP-ribosyltransferase that plays an essential role in DNA damage repair, telomere maintenance, metabolic homeostasis, inflammation, tumorigenesis and aging. Displays protein-lysine deacetylase or defatty-acylase (demyristoylase and depalmitoylase) activity, depending on the context. Acts as a key histone deacetylase by catalyzing deacetylation of histone H3 at 'Lys-9', 'Lys-18' and 'Lys-56' (H3K9ac, H3K18ac and H3K56ac, respectively), suppressing target gene expression of several transcription factors, including NF-kappa-B. Acts as an inhibitor of transcription elongation by mediating deacetylation of H3K9ac and H3K56ac, preventing release of NELFE from chromatin and causing transcriptional pausing. Involved in DNA repair by promoting double-strand break (DSB) repair: acts as a DSB sensor by recognizing and binding DSB sites, leading to (1) recruitment of DNA repair proteins, such as SMARCA5/SNF2H, and (2) deacetylation of histone H3K9ac and H3K56ac. SIRT6 participation to DSB repair is probably involved in extension of life span. Also promotes DNA repair by deacetylating non-histone proteins, such as DDB2 and p53/TP53. Specifically deacetylates H3K18ac at pericentric heterochromatin, thereby maintaining pericentric heterochromatin silencing at centromeres and protecting against genomic instability and cellular senescence. Involved in telomere maintenance by catalyzing deacetylation of histone H3 in telomeric chromatin, regulating telomere position effect and telomere movement in response to DNA damage. Required for embryonic stem cell differentiation by mediating histone deacetylation of H3K9ac. Plays a major role in metabolism by regulating processes such as glycolysis, gluconeogenesis, insulin secretion and lipid metabolism. Inhibits glycolysis via histone deacetylase activity and by acting as a corepressor of the transcription factor HIF1A, thereby controlling the expression of multiple glycolytic genes. Has tumor suppressor activity by repressing glycolysis, thereby inhibiting the Warburg effect. Also regulates glycolysis and tumorigenesis by mediating deacetylation and nuclear export of non-histone proteins, such as isoform M2 of PKM (PKM2). Acts as a negative regulator of gluconeogenesis by mediating deacetylation of non-histone proteins, such as FOXO1 and KAT2A/GCN5. Promotes beta-oxidation of fatty acids during fasting by catalyzing deacetylation of NCOA2, inducing coactivation of PPARA. Acts as a regulator of lipid catabolism in brown adipocytes, both by catalyzing deacetylation of histones and non-histone proteins, such as FOXO1. Also acts as a regulator of circadian rhythms, both by regulating expression of clock-controlled genes involved in lipid and carbohydrate metabolism, and by catalyzing deacetylation of PER2. The defatty-acylase activity is specifically involved in regulation of protein secretion. Has high activity toward long-chain fatty acyl groups and mediates protein-lysine demyristoylation and depalmitoylation of target proteins, such as RRAS2 and TNF, thereby regulating their secretion. Also acts as a mono-ADP-ribosyltransferase by mediating mono-ADP-ribosylation of PARP1, TRIM28/KAP1 or SMARCC2/BAF170. Mono-ADP-ribosyltransferase activity is involved in DNA repair, cellular senescence, repression of LINE-1 retrotransposon elements and regulation of transcription. The protein is NAD-dependent protein deacylase sirtuin-6 of Macaca fascicularis (Crab-eating macaque).